The chain runs to 1253 residues: Cytoplasmic FMR1-interacting protein 1 homolog (1253 aa).

It belongs to the CYFIP family.

Its subcellular location is the cytoplasm. It localises to the perinuclear region. The protein resides in the cell projection. The protein localises to the lamellipodium. It is found in the ruffle. Its subcellular location is the synapse. It localises to the synaptosome. Involved in formation of membrane ruffles and lamellipodia protrusions and in axon outgrowth. Binds to F-actin but not to RNA. The polypeptide is Cytoplasmic FMR1-interacting protein 1 homolog (Danio rerio (Zebrafish)).